A 511-amino-acid polypeptide reads, in one-letter code: Bifunctional purine biosynthesis protein PurH (511 aa).

One can recognise an MGS-like domain in the interval 1-145; the sequence is MKKRALVSVS…KNHKFVSVIV (145 aa).

It belongs to the PurH family.

It catalyses the reaction (6R)-10-formyltetrahydrofolate + 5-amino-1-(5-phospho-beta-D-ribosyl)imidazole-4-carboxamide = 5-formamido-1-(5-phospho-D-ribosyl)imidazole-4-carboxamide + (6S)-5,6,7,8-tetrahydrofolate. It carries out the reaction IMP + H2O = 5-formamido-1-(5-phospho-D-ribosyl)imidazole-4-carboxamide. It participates in purine metabolism; IMP biosynthesis via de novo pathway; 5-formamido-1-(5-phospho-D-ribosyl)imidazole-4-carboxamide from 5-amino-1-(5-phospho-D-ribosyl)imidazole-4-carboxamide (10-formyl THF route): step 1/1. The protein operates within purine metabolism; IMP biosynthesis via de novo pathway; IMP from 5-formamido-1-(5-phospho-D-ribosyl)imidazole-4-carboxamide: step 1/1. The chain is Bifunctional purine biosynthesis protein PurH from Bacillus thuringiensis (strain Al Hakam).